Consider the following 1003-residue polypeptide: Alpha-1,4 glucan phosphorylase L isozyme, chloroplastic/amyloplastic (1003 aa).

The N-terminal 64 residues, 1-64, are a transit peptide targeting the chloroplast; sequence MASMTMRFHP…RRRSAFSVKC (64 aa). Disordered regions lie at residues 71–91 and 526–593; these read KQKV…SSFA and SSEE…KKLP. Acidic residues predominate over residues 537-553; it reads GEEEETSKEGGEEEEEK. Residues 569–580 show a composition bias toward basic and acidic residues; it reads EVEKAIAEKDGT. Lysine 849 carries the post-translational modification N6-(pyridoxal phosphate)lysine.

It belongs to the glycogen phosphorylase family. Pyridoxal 5'-phosphate serves as cofactor. Found predominantly in cotyledons and early seed coat.

It localises to the plastid. Its subcellular location is the chloroplast. It is found in the amyloplast. It carries out the reaction [(1-&gt;4)-alpha-D-glucosyl](n) + phosphate = [(1-&gt;4)-alpha-D-glucosyl](n-1) + alpha-D-glucose 1-phosphate. Its function is as follows. Phosphorylase is an important allosteric enzyme in carbohydrate metabolism. Enzymes from different sources differ in their regulatory mechanisms and in their natural substrates. However, all known phosphorylases share catalytic and structural properties. In terms of biological role, the L isoform exhibits higher affinity for unbranched substrates such as glucan-like amylose and maltodextrin. This is Alpha-1,4 glucan phosphorylase L isozyme, chloroplastic/amyloplastic (PHO1) from Vicia faba (Broad bean).